Reading from the N-terminus, the 412-residue chain is Proline-rich protein 30 (412 aa).

The span at 33–45 (HNLQPLSAHQSLR) shows a compositional bias: polar residues. Disordered regions lie at residues 33–75 (HNLQ…QFGS), 123–174 (PLTP…SNRQ), and 318–412 (PKEV…KSSV). Composition is skewed to low complexity over residues 126-142 (PSFS…PHSP) and 334-350 (PSPA…ADPA). A compositionally biased stretch (polar residues) spans 353-372 (TPSQTRSFRSAGLQSPNSPR).

The sequence is that of Proline-rich protein 30 (PRR30) from Macaca fascicularis (Crab-eating macaque).